A 157-amino-acid chain; its full sequence is MITEIMKQVEIFTDGSCLGNPGPGGYGIVMRYKGTEKTFSGGFNQTTNNRMEMLAAVVALRNLKEPCIVVLTTDSQYVRQGITQWIHGWKKRGWKKADKKPVVNADLWKQLDAEAERHTVDWRWVKGHAGHRENEMCDDLARTAAENPTQDDTGYPG.

In terms of domain architecture, RNase H type-1 spans 5–146 (IMKQVEIFTD…CDDLARTAAE (142 aa)). Residues aspartate 14, glutamate 52, aspartate 74, and aspartate 138 each contribute to the Mg(2+) site.

The protein belongs to the RNase H family. Monomer. Mg(2+) is required as a cofactor.

It is found in the cytoplasm. It catalyses the reaction Endonucleolytic cleavage to 5'-phosphomonoester.. Functionally, endonuclease that specifically degrades the RNA of RNA-DNA hybrids. This is Ribonuclease H from Aliivibrio salmonicida (strain LFI1238) (Vibrio salmonicida (strain LFI1238)).